Consider the following 134-residue polypeptide: Acyl carrier protein, chloroplastic (134 aa).

The N-terminal 51 residues, 1–51, are a transit peptide targeting the chloroplast; it reads MSTTFCSSVSMQATSLAATTRISFQKPGLVSRTNLSFNLRRSIPTRLSVSC. The region spanning 55–130 is the Carrier domain; it reads PETVEKVSKI…EAAELIEELV (76 aa). Ser-90 is subject to O-(pantetheine 4'-phosphoryl)serine.

The protein belongs to the acyl carrier protein (ACP) family. Post-translationally, 4'-phosphopantetheine is transferred from CoA to a specific serine of apo-ACP by acpS. This modification is essential for activity because fatty acids are bound in thioester linkage to the sulfhydryl of the prosthetic group. Seed.

The protein resides in the plastid. Its subcellular location is the chloroplast. The protein operates within lipid metabolism; fatty acid biosynthesis. Carrier of the growing fatty acid chain in fatty acid biosynthesis. This is Acyl carrier protein, chloroplastic (ACL1.A2) from Brassica napus (Rape).